Here is a 399-residue protein sequence, read N- to C-terminus: uncharacterized protein (399 aa).

The tract at residues 375–399 (AAGGHRGSHGKSEQAATVRVVDDRR) is disordered.

It belongs to the mycobacterial PPE family.

This is an uncharacterized protein from Mycobacterium tuberculosis (strain CDC 1551 / Oshkosh).